Here is a 231-residue protein sequence, read N- to C-terminus: Large ribosomal subunit protein uL1 (231 aa).

Belongs to the universal ribosomal protein uL1 family. Part of the 50S ribosomal subunit.

Binds directly to 23S rRNA. The L1 stalk is quite mobile in the ribosome, and is involved in E site tRNA release. In terms of biological role, protein L1 is also a translational repressor protein, it controls the translation of the L11 operon by binding to its mRNA. The protein is Large ribosomal subunit protein uL1 of Francisella philomiragia subsp. philomiragia (strain ATCC 25017 / CCUG 19701 / FSC 153 / O#319-036).